Reading from the N-terminus, the 111-residue chain is MTVLRSLVLFGLAALAEIGGAWLVWQGWREHRGLWWIAAGVIALGAYGFVATFQPDPDFGRVLAAYGGVFVVGSLAWGVLVDRFRPDRWDLLGAGICLVGVAVIMYAPRGG.

4 consecutive transmembrane segments (helical) span residues 7-27 (LVLF…VWQG), 33-53 (GLWW…VATF), 62-82 (VLAA…VLVD), and 91-111 (LLGA…PRGG).

Belongs to the UPF0060 family.

The protein localises to the cell membrane. The protein is UPF0060 membrane protein NFA_36830 of Nocardia farcinica (strain IFM 10152).